We begin with the raw amino-acid sequence, 161 residues long: Cyclic pyranopterin monophosphate synthase (161 aa).

Residues 75 to 77 (LCH) and 113 to 114 (ME) each bind substrate. Aspartate 128 is a catalytic residue.

Belongs to the MoaC family. As to quaternary structure, homohexamer; trimer of dimers.

The enzyme catalyses (8S)-3',8-cyclo-7,8-dihydroguanosine 5'-triphosphate = cyclic pyranopterin phosphate + diphosphate. Its pathway is cofactor biosynthesis; molybdopterin biosynthesis. Catalyzes the conversion of (8S)-3',8-cyclo-7,8-dihydroguanosine 5'-triphosphate to cyclic pyranopterin monophosphate (cPMP). In Edwardsiella ictaluri (strain 93-146), this protein is Cyclic pyranopterin monophosphate synthase.